A 479-amino-acid polypeptide reads, in one-letter code: Aspartyl/glutamyl-tRNA(Asn/Gln) amidotransferase subunit B (479 aa).

The protein belongs to the GatB/GatE family. GatB subfamily. As to quaternary structure, heterotrimer of A, B and C subunits.

The catalysed reaction is L-glutamyl-tRNA(Gln) + L-glutamine + ATP + H2O = L-glutaminyl-tRNA(Gln) + L-glutamate + ADP + phosphate + H(+). It catalyses the reaction L-aspartyl-tRNA(Asn) + L-glutamine + ATP + H2O = L-asparaginyl-tRNA(Asn) + L-glutamate + ADP + phosphate + 2 H(+). Functionally, allows the formation of correctly charged Asn-tRNA(Asn) or Gln-tRNA(Gln) through the transamidation of misacylated Asp-tRNA(Asn) or Glu-tRNA(Gln) in organisms which lack either or both of asparaginyl-tRNA or glutaminyl-tRNA synthetases. The reaction takes place in the presence of glutamine and ATP through an activated phospho-Asp-tRNA(Asn) or phospho-Glu-tRNA(Gln). In Geotalea daltonii (strain DSM 22248 / JCM 15807 / FRC-32) (Geobacter daltonii), this protein is Aspartyl/glutamyl-tRNA(Asn/Gln) amidotransferase subunit B.